The chain runs to 85 residues: UPF0512 protein R (85 aa).

The protein belongs to the UPF0512 family.

The protein is UPF0512 protein R of Dictyostelium discoideum (Social amoeba).